A 948-amino-acid chain; its full sequence is MQEIRIRGAREHNLKNINVDIPRDQLVVITGLSGSGKSSLAFDTIYAEGQRRYVESLSAYARQFLGQMEKPDLDLIEGLSPAISIEQKTTHRNPRSTVGTVTEIYDYLRLLYARVGKPHCPECGTPIQSMSIDQITARVLAFPQGSKLQILAPVISGKKGEHKDVLEKIRKDGFNRVRINGEIRTLEEEIVLKKNFKTSIEIVVDRIVMKEGIRSRLADSVETALKQSEGLVILDDGSKDHILSQKMACPNGHDIGFTELSPRMFSFNSPYGACETCDGLGSLLEFDEDLLVNDPELSLVDGCIEAWAGSKSNGFWFMATLKSLSDSLKFKMNTPWKDLPEKTRQTILYGDKKIKIEYDFRGANSHYEFTKEYEGVIPNLQRRYKETKSDSMRQWFESYMTNHPCPSCKGKRLKRESLSVKVHNVPVDEFTSYSIEKALNFVQNLKVTGAEEIIAKPILKEIHQRLSFLNDVGVGYLTLERSAGSLSGGEAQRIRLATQIGSRLMGVLYILDEPSIGLHQRDNTKLVSTLKNLRDLGNTVLVVEHDQETMEESDWLIDMGPGAGVHGGSIVCAGTPAEVSKHKNSLTGKYLSGRLKVPIPAKLREGNGSKLQIIGAKENNLKNIDVNIPLGKLVVITGVSGSGKSTLINDILYNAAAHKVMKMKTLAGKHKTIKGFENIDKIINIDQSPIGRTPRSNPATYTGLFTPIREMFAGLEEAKLRGYGPGRFSFNVSGGRCETCEGDGILKIEMHFLPDVYVTCEVCKGKRYNQETLEVRYKGKNIFDVLEMTVEDANQFFENIPIVKRKLETLLEVGLGYIRLGQPATTFSGGEAQRIKLATELSKRPTGKTLYILDEPTTGLHFEDVRRLSEVLHTLVDRGNSMIVIEHNLDVIKQADWIVDMGPEGGDGGGLVIAEGIPKDIAKIKNSYTGQYLKKIFTSSEKISRKTK.

An ATP-binding site is contributed by 31–38 (GLSGSGKS). The segment at 249–277 (CPNGHDIGFTELSPRMFSFNSPYGACETC) adopts a C4-type zinc-finger fold. 2 ABC transporter domains span residues 307–586 (WAGS…KNSL) and 606–934 (GNGS…QYLK). Position 638–645 (638–645 (GVSGSGKS)) interacts with ATP. Residues 737-763 (CETCEGDGILKIEMHFLPDVYVTCEVC) form a C4-type zinc finger.

This sequence belongs to the ABC transporter superfamily. UvrA family. In terms of assembly, forms a heterotetramer with UvrB during the search for lesions.

Its subcellular location is the cytoplasm. Its function is as follows. The UvrABC repair system catalyzes the recognition and processing of DNA lesions. UvrA is an ATPase and a DNA-binding protein. A damage recognition complex composed of 2 UvrA and 2 UvrB subunits scans DNA for abnormalities. When the presence of a lesion has been verified by UvrB, the UvrA molecules dissociate. The protein is UvrABC system protein A of Leptospira interrogans serogroup Icterohaemorrhagiae serovar copenhageni (strain Fiocruz L1-130).